We begin with the raw amino-acid sequence, 270 residues long: Phosphonoacetaldehyde hydrolase (270 aa).

Asp11 (nucleophile) is an active-site residue. Mg(2+) is bound by residues Asp11 and Ala13. Lys53 acts as the Schiff-base intermediate with substrate in catalysis. Asp187 serves as a coordination point for Mg(2+).

This sequence belongs to the HAD-like hydrolase superfamily. PhnX family. Homodimer. The cofactor is Mg(2+).

The catalysed reaction is phosphonoacetaldehyde + H2O = acetaldehyde + phosphate + H(+). Functionally, involved in phosphonate degradation. The sequence is that of Phosphonoacetaldehyde hydrolase from Salmonella enteritidis PT4 (strain P125109).